The following is a 230-amino-acid chain: Ureidoacrylate amidohydrolase RutB (230 aa).

Aspartate 24 serves as the catalytic Proton acceptor. Lysine 133 is a catalytic residue. Cysteine 166 acts as the Nucleophile in catalysis.

This sequence belongs to the isochorismatase family. RutB subfamily.

The enzyme catalyses (Z)-3-ureidoacrylate + H2O + H(+) = (Z)-3-aminoacrylate + NH4(+) + CO2. The catalysed reaction is (Z)-3-ureidoacrylate + H2O = (Z)-3-aminoacrylate + carbamate + H(+). It catalyses the reaction (Z)-2-methylureidoacrylate + H2O + H(+) = (Z)-2-methylaminoacrylate + NH4(+) + CO2. Its function is as follows. Hydrolyzes ureidoacrylate to form aminoacrylate and carbamate. The carbamate hydrolyzes spontaneously, thereby releasing one of the nitrogen atoms of the pyrimidine ring as ammonia and one of its carbon atoms as CO2. This chain is Ureidoacrylate amidohydrolase RutB, found in Escherichia coli O111:H- (strain 11128 / EHEC).